We begin with the raw amino-acid sequence, 181 residues long: Trans-acting factor D (181 aa).

Plays a role in 2-micron plasmid partitioning. Antagonizes transcriptional repression of recombinase FLP by REP1-REP2. Regulates both stability and copy number of the plasmid by blocking the formation of the REP1-REP2 repressor complex. This chain is Trans-acting factor D, found in Saccharomyces cerevisiae (strain ATCC 204508 / S288c) (Baker's yeast).